The sequence spans 127 residues: MORF4 family-associated protein 1-like 1 (127 aa).

Residues glycine 87 to valine 118 are a coiled coil.

The protein belongs to the MORF4 family-associated protein family.

This is MORF4 family-associated protein 1-like 1 (MRFAP1L1) from Homo sapiens (Human).